Here is a 1296-residue protein sequence, read N- to C-terminus: Capping protein, Arp2/3 and myosin-I linker protein 2 (1296 aa).

LRR repeat units lie at residues 63–87 (DCTF…TFEL), 88–110 (ESLP…AQHV), 248–271 (ELVL…LAGH), 273–296 (NSGL…ALGR), 305–328 (DSTL…DSGG), 363–386 (CSSL…AAPA), 395–415 (TRML…ALRA), 426–448 (IHDL…VIQD), 453–477 (AGAL…VLAI), 480–506 (SRSL…VLHR), 515–538 (DCPL…LIRA), 542–565 (NPKL…MLAK), 570–594 (NTRL…VAQA), 598–621 (NHSL…RPEL), and 836–859 (TMAP…GLEE). The interval 507-601 (IAQLMQDDDC…AQALEQNHSL (95 aa)) is tropomodulin-like. The segment at 975-1002 (ATPVPRTLRKKLGTLFAFKKPRSTRGPR) is necessary for localization at the cell membrane. The tract at residues 988-1296 (TLFAFKKPRS…TDQRGGGPNP (309 aa)) is disordered. S1008 is subject to Phosphoserine. Composition is skewed to basic and acidic residues over residues 1079–1091 (RPDK…RGDT) and 1118–1134 (ESKR…KAGS). S1134 is modified (phosphoserine). At T1145 the chain carries Phosphothreonine. Residues 1176 to 1185 (TWKTLGQQLN) show a composition bias toward polar residues. R1191 carries the post-translational modification Omega-N-methylarginine. Composition is skewed to pro residues over residues 1199 to 1209 (PGPPSPCPSPS) and 1267 to 1285 (PLPP…PPSP). 2 positions are modified to phosphoserine: S1203 and S1281.

It belongs to the CARMIL family. As to quaternary structure, forms homodimers. Interacts (via C-terminus) with heterodimeric capping protein (CP); the interaction inhibits CP activity and hence promotes actin polymerization at the barbed end of actin filaments.

The protein localises to the cytoplasm. Its subcellular location is the cytoskeleton. The protein resides in the cell membrane. It localises to the cell projection. It is found in the lamellipodium. The protein localises to the ruffle. Its function is as follows. Cell membrane-cytoskeleton-associated protein that plays a role in the regulation of actin polymerization at the barbed end of actin filaments. Prevents F-actin heterodimeric capping protein (CP) activity at the leading edges of migrating cells, and hence generates uncapped barbed ends and enhances actin polymerization. Plays a role in cell protrusion formations; involved in cell polarity, lamellipodial assembly, membrane ruffling and macropinosome formations. Involved as well in cell migration and invadopodia formation during wound healing. Required for CD28-mediated stimulation of NF-kappa-B signaling, involved in naive T cells activation, maturation into T memory cells, and differentiation into T helper cells. Required for CD28-mediated differentiation of T regulatory cells. This chain is Capping protein, Arp2/3 and myosin-I linker protein 2, found in Mus musculus (Mouse).